A 342-amino-acid chain; its full sequence is MVQNIAILGASGYTGAELVRLIATHPAMRIVALSGDRKAGMAMSEVFPFLRHLDLPRLQKIEEIDFSSVDLAFCALPHATSQAVIADLPRDLKVVDLSADFRLRDPAAYETWYGKPHAAPELQKEAVYGLTEFYRDEIRGARLVAGTGCNAATGQYAIRPLIEAGVIDLDDILIDLKAGVSGAGRSLKENLLHAELSEGTHAYSAGGRHRHLGEFDQEFSKIAGRPVQVRFTPHLTPMNRGILANVYVKGDPQAVHRALAERYLTETFLEVLPFGALPSTRDIRGSNYVHIGVIGDRVPGCAMVVAVLDNLCKGSSGQAIQNANLMLGLDEAEGLRLAPVFP.

The active site involves C149.

The protein belongs to the NAGSA dehydrogenase family. Type 1 subfamily.

The protein resides in the cytoplasm. It carries out the reaction N-acetyl-L-glutamate 5-semialdehyde + phosphate + NADP(+) = N-acetyl-L-glutamyl 5-phosphate + NADPH + H(+). It functions in the pathway amino-acid biosynthesis; L-arginine biosynthesis; N(2)-acetyl-L-ornithine from L-glutamate: step 3/4. Functionally, catalyzes the NADPH-dependent reduction of N-acetyl-5-glutamyl phosphate to yield N-acetyl-L-glutamate 5-semialdehyde. This Cereibacter sphaeroides (strain ATCC 17029 / ATH 2.4.9) (Rhodobacter sphaeroides) protein is N-acetyl-gamma-glutamyl-phosphate reductase.